A 614-amino-acid polypeptide reads, in one-letter code: Ankyrin repeat domain-containing protein 55 (614 aa).

A disordered region spans residues 1–20 (MMRQATMDFSTPSVFDQQRG). Polar residues predominate over residues 7 to 16 (MDFSTPSVFD). 9 ANK repeats span residues 26-55 (VDLTMVYQAASNGDVNALTAVIREDPSILE), 60-89 (EGCTPLMHAVSGRQADTVKLLLKMGANINM), 93-125 (YGRTSLCLATYLGWLEGCVSLLRNGAKHNIPDK), 126-157 (NGRLPLHAATAEPDMRLLTVLLQQSNISEINH), 161-190 (EGMTPLHWAAFHNQPQHTQMLLKKGADPTL), 194-223 (DFKTALHWAVQSGNRILCSIILSHHQGPSI), 230-260 (SGKTCVHIAAAAGFSDIIHELARVPECNLQA), 264-293 (DDRTPLHWAAAAGKAECVQSLLELGMDSNL), and 297-326 (NESTPLAYALYCGHTACVKLLSQESRTEPT). 4 disordered regions span residues 319-339 (QESRTEPTRPPPSQSSRPQKK), 354-375 (KKEEQRAHQKDPSRDRYREEDT), 454-476 (TSHAGLSSAPHHMAQRSQKSRSE), and 564-614 (RNNL…SDEN). The span at 354 to 373 (KKEEQRAHQKDPSRDRYREE) shows a compositional bias: basic and acidic residues. Ser475 bears the Phosphoserine mark.

The sequence is that of Ankyrin repeat domain-containing protein 55 (ANKRD55) from Homo sapiens (Human).